Here is a 157-residue protein sequence, read N- to C-terminus: SsrA-binding protein (157 aa).

The interval 133–157 is disordered; sequence LHDKRETAKERDWQRDKARLMRDKG. Positions 135 to 157 are enriched in basic and acidic residues; it reads DKRETAKERDWQRDKARLMRDKG.

Belongs to the SmpB family.

It is found in the cytoplasm. Its function is as follows. Required for rescue of stalled ribosomes mediated by trans-translation. Binds to transfer-messenger RNA (tmRNA), required for stable association of tmRNA with ribosomes. tmRNA and SmpB together mimic tRNA shape, replacing the anticodon stem-loop with SmpB. tmRNA is encoded by the ssrA gene; the 2 termini fold to resemble tRNA(Ala) and it encodes a 'tag peptide', a short internal open reading frame. During trans-translation Ala-aminoacylated tmRNA acts like a tRNA, entering the A-site of stalled ribosomes, displacing the stalled mRNA. The ribosome then switches to translate the ORF on the tmRNA; the nascent peptide is terminated with the 'tag peptide' encoded by the tmRNA and targeted for degradation. The ribosome is freed to recommence translation, which seems to be the essential function of trans-translation. In Methylobacterium sp. (strain 4-46), this protein is SsrA-binding protein.